The chain runs to 239 residues: Fatty acid metabolism regulator protein (239 aa).

Residues 6-74 (QSPAGFAEEY…HGKPTKVNNF (69 aa)) enclose the HTH gntR-type domain. Positions 34–53 (ERELSELIGVTRTTLREVLQ) form a DNA-binding region, H-T-H motif.

In terms of assembly, homodimer.

It is found in the cytoplasm. Its function is as follows. Multifunctional regulator of fatty acid metabolism. The chain is Fatty acid metabolism regulator protein from Salmonella paratyphi C (strain RKS4594).